We begin with the raw amino-acid sequence, 805 residues long: Sucrose synthase (805 aa).

The GT-B glycosyltransferase stretch occupies residues 275-752; sequence MVFNVVILSP…GLQRIEEKYT (478 aa).

This sequence belongs to the glycosyltransferase 1 family. Plant sucrose synthase subfamily.

It carries out the reaction an NDP-alpha-D-glucose + D-fructose = a ribonucleoside 5'-diphosphate + sucrose + H(+). Its function is as follows. Sucrose-cleaving enzyme that provides UDP-glucose and fructose for various metabolic pathways. The sequence is that of Sucrose synthase from Medicago sativa (Alfalfa).